Here is a 204-residue protein sequence, read N- to C-terminus: Recombination protein RecR (204 aa).

The C4-type zinc finger occupies cysteine 58–cysteine 75. Residues threonine 83–proline 181 form the Toprim domain.

Belongs to the RecR family.

May play a role in DNA repair. It seems to be involved in an RecBC-independent recombinational process of DNA repair. It may act with RecF and RecO. The polypeptide is Recombination protein RecR (Chlorobium chlorochromatii (strain CaD3)).